The primary structure comprises 838 residues: Probable bifunctional folylpolyglutamate synthase/dihydropteroate synthase (838 aa).

The tract at residues 1–418 (MEYHEAVNFL…LVVGSLYVVA (418 aa)) is folylpolyglutamate synthase. 46 to 52 (GSNGKGS) is an ATP binding site. The disordered stretch occupies residues 541–561 (AADAGEDDERGAGDASDAGHD). The region spanning 569–819 (TAVMGILNVT…DVPENVAAVN (251 aa)) is the Pterin-binding domain. The DHPS stretch occupies residues 571 to 838 (VMGILNVTPN…RFEADAERED (268 aa)). N576 contributes to the Mg(2+) binding site. (7,8-dihydropterin-6-yl)methyl diphosphate contacts are provided by residues T616, D649, N668, D738, K774, and 807–809 (RVH).

It in the N-terminal section; belongs to the folylpolyglutamate synthase family. This sequence in the C-terminal section; belongs to the DHPS family. The cofactor is Mg(2+).

The enzyme catalyses (6S)-5,6,7,8-tetrahydrofolyl-(gamma-L-Glu)(n) + L-glutamate + ATP = (6S)-5,6,7,8-tetrahydrofolyl-(gamma-L-Glu)(n+1) + ADP + phosphate + H(+). It catalyses the reaction (7,8-dihydropterin-6-yl)methyl diphosphate + 4-aminobenzoate = 7,8-dihydropteroate + diphosphate. The protein operates within cofactor biosynthesis; tetrahydrofolylpolyglutamate biosynthesis. It functions in the pathway cofactor biosynthesis; tetrahydrofolate biosynthesis; 7,8-dihydrofolate from 2-amino-4-hydroxy-6-hydroxymethyl-7,8-dihydropteridine diphosphate and 4-aminobenzoate: step 1/2. Functionally, can complement an H.volcanii mutant strain that is thymidine auxotroph because it lacks the two dihydrofolate reductase genes encoded by hdrA and hdrB. The polypeptide is Probable bifunctional folylpolyglutamate synthase/dihydropteroate synthase (folCP) (Haloferax volcanii (strain ATCC 29605 / DSM 3757 / JCM 8879 / NBRC 14742 / NCIMB 2012 / VKM B-1768 / DS2) (Halobacterium volcanii)).